The chain runs to 199 residues: Auxin-responsive protein IAA1 (199 aa).

The short motif at 25–29 (LTLRL) is the EAR-like (transcriptional repression) element. The tract at residues 31–74 (GSLAAAAAPDPDRKRSSPSSSDAADAADNSSPLAAAADAPPAPK) is disordered. Residues 47–69 (SPSSSDAADAADNSSPLAAAADA) show a composition bias toward low complexity. A PB1 domain is found at 93 to 187 (AKFVKVAVDG…TCQRLRLMKS (95 aa)).

It belongs to the Aux/IAA family. In terms of assembly, homodimers and heterodimers. In terms of tissue distribution, highly expressed in flowers. Expressed at low levels in roots and shoots.

It is found in the nucleus. Functionally, aux/IAA proteins are short-lived transcriptional factors that function as repressors of early auxin response genes at low auxin concentrations. This is Auxin-responsive protein IAA1 (IAA1) from Oryza sativa subsp. japonica (Rice).